A 58-amino-acid polypeptide reads, in one-letter code: uncharacterized protein (58 aa).

2 helical membrane-spanning segments follow: residues 7–27 (IFDIVMYIIFGVLSLFLVAKT) and 29–49 (YGTGVLVFVAILYLAVIAYKI).

The protein resides in the cell membrane. This is an uncharacterized protein from Bacillus subtilis (strain 168).